Here is a 715-residue protein sequence, read N- to C-terminus: ATP-dependent RecD2 DNA helicase (715 aa).

Positions 1–150 are not required for helicase activity; that stretch reads MSAALPAEPF…STLHKMVSSW (150 aa). ATP-binding positions include Q343 and 363-367; that span reads GTGKS. 2 DNA-binding regions span residues G391 and 407–414; that span reads TVHRLLGY. Q466 is a binding site for ATP. V470 is a DNA-binding region. R493 contacts ATP. 3 DNA-binding regions span residues 554 to 555, 596 to 604, and 644 to 647; these read RK, NDYNNEIFN, and TVHR. Residue R679 participates in ATP binding.

The protein belongs to the RecD family. RecD2 subfamily. Monomer; homodimers seem to be inactive.

It carries out the reaction Couples ATP hydrolysis with the unwinding of duplex DNA at the replication fork by translocating in the 5'-3' direction. This creates two antiparallel DNA single strands (ssDNA). The leading ssDNA polymer is the template for DNA polymerase III holoenzyme which synthesizes a continuous strand.. It catalyses the reaction ATP + H2O = ADP + phosphate + H(+). Functionally, DNA-dependent ATPase (ssDNA stimulates the ATPase better than dsDNA) and ATP-dependent 5'-3' DNA helicase. Plays a role in an antioxidant pathway. Involved in DNA damage repair and/or recombination. Appears to move along DNA in single base steps, powered by hydrolysis of 1 molecule of ATP. Has low processivity, unwinds about 15-20 base pairs/second. Short (20 bp) substrates with 5'-overhangs or forked ends are the best substrates, is much less efficient on 52 or 76 bp substrates with 5'-overhangs. The presence of single-stranded DNA-binding protein (SSB) increases unwinding 4-5 fold. Has no activity on blunt DNA or DNA with 3'-overhangs. Requires at least 10 bases of 5'-ssDNA for helicase activity. The chain is ATP-dependent RecD2 DNA helicase from Deinococcus radiodurans (strain ATCC 13939 / DSM 20539 / JCM 16871 / CCUG 27074 / LMG 4051 / NBRC 15346 / NCIMB 9279 / VKM B-1422 / R1).